The sequence spans 411 residues: Translation initiation factor 2 subunit gamma (411 aa).

In terms of domain architecture, tr-type G spans 9–201 (QPSVNIGMVG…AIEKYIPSPK (193 aa)). A G1 region spans residues 18 to 25 (GHVDHGKS). Asp-21, Ser-25, Gly-46, and Ser-48 together coordinate Mg(2+). 21 to 26 (DHGKST) serves as a coordination point for GTP. The interval 46-50 (GISIK) is G2. Residues 88 to 91 (DAPG) form a G3 region. GTP contacts are provided by residues 144–147 (NKID) and 179–181 (SAY). Residues 144–147 (NKID) are G4. Residues 179–181 (SAY) form a G5 region.

This sequence belongs to the TRAFAC class translation factor GTPase superfamily. Classic translation factor GTPase family. EIF2G subfamily. In terms of assembly, heterotrimer composed of an alpha, a beta and a gamma chain. It depends on Mg(2+) as a cofactor.

It carries out the reaction GTP + H2O = GDP + phosphate + H(+). EIF-2 functions in the early steps of protein synthesis by forming a ternary complex with GTP and initiator tRNA. The protein is Translation initiation factor 2 subunit gamma of Thermoplasma acidophilum (strain ATCC 25905 / DSM 1728 / JCM 9062 / NBRC 15155 / AMRC-C165).